We begin with the raw amino-acid sequence, 793 residues long: Peroxidase-like protein (793 aa).

The first 20 residues, 1-20, serve as a signal peptide directing secretion; sequence MNLFICHVFLLLLHGYLIIC.

It belongs to the peroxidase family. In terms of tissue distribution, prismatic layer of shell (at protein level). Expressed primarily in the mantle with highest level in the mantle edge and lower level in the mantle pallium.

The protein localises to the secreted. This Margaritifera margaritifera (Freshwater pearl mussel) protein is Peroxidase-like protein.